A 416-amino-acid chain; its full sequence is MTTRNDCLALDAQDSLAPLRQQFALPEGVIYLDGNSLGARPVAALARAQAVIAEEWGNGLIRSWNSAGWRDLSERLGNRLATLIGARDGEVVVTDTTSINLFKVLSAALRVQATRSPERRVIVTETSNFPTDLYIAEGLADMLQQGYTLRLVDSPEELPQAIDQDTAVVMLTHVNYKTGYMHDMQALTALSHECGALAIWDLAHSAGAVPVDLHQAGADYAIGCTYKYLNGGPGSQAFVWVSPQLCDLVPQPLSGWFGHSRQFAMEPRYEPSNGIARYLCGTQPITSLAMVECGLDVFAQTDMASLRRKSLALTDLFIELVEQRCAAHELTLVTPREHAKRGSHVSFEHPEGYAVIQALIDRGVIGDYREPRIMRFGFTPLYTTFTEVWDAVQILGEILDRKTWAQAQFQVRHSVT.

Pyridoxal 5'-phosphate-binding positions include Thr97, Ser98, 129 to 132 (FPTD), Thr172, Asp201, His204, and Tyr226. Lys227 carries the post-translational modification N6-(pyridoxal phosphate)lysine. Pyridoxal 5'-phosphate-binding residues include Trp256 and Thr282.

Belongs to the kynureninase family. As to quaternary structure, homodimer. It depends on pyridoxal 5'-phosphate as a cofactor.

The catalysed reaction is L-kynurenine + H2O = anthranilate + L-alanine + H(+). It carries out the reaction 3-hydroxy-L-kynurenine + H2O = 3-hydroxyanthranilate + L-alanine + H(+). Its pathway is amino-acid degradation; L-kynurenine degradation; L-alanine and anthranilate from L-kynurenine: step 1/1. The protein operates within cofactor biosynthesis; NAD(+) biosynthesis; quinolinate from L-kynurenine: step 2/3. Functionally, catalyzes the cleavage of L-kynurenine (L-Kyn) and L-3-hydroxykynurenine (L-3OHKyn) into anthranilic acid (AA) and 3-hydroxyanthranilic acid (3-OHAA), respectively. This chain is Kynureninase, found in Pseudomonas fluorescens.